We begin with the raw amino-acid sequence, 181 residues long: Adenine phosphoribosyltransferase 1 (181 aa).

Belongs to the purine/pyrimidine phosphoribosyltransferase family. Homodimer.

The protein localises to the cytoplasm. The enzyme catalyses AMP + diphosphate = 5-phospho-alpha-D-ribose 1-diphosphate + adenine. Its pathway is purine metabolism; AMP biosynthesis via salvage pathway; AMP from adenine: step 1/1. In terms of biological role, catalyzes a salvage reaction resulting in the formation of AMP, that is energically less costly than de novo synthesis. The protein is Adenine phosphoribosyltransferase 1 (APT1) of Triticum aestivum (Wheat).